A 275-amino-acid chain; its full sequence is MNTPEHSQLGKSSAYVDQYDASLLFPIPRAEKRAEIGVTGTPPFFGADMWTAFELSWLNMRGKPQVALAHITVPCESPNIVESKSFKLYLNSFNNTRFSDARDVRERIRADINAAVGAGVGVKTLGPELFDREPVHELDGLSLDRLDVECIHFTPAPELLFAEFDEPPVDETLTSNLLKSNCLVTGQPDWGSVQISYSGPQINQEGLLQYLVSFRNHNEFHEQCVERIFMDVWTRCRPLKLSVYARYTRRGGLDINPFRTSHPQALPANIRMARQ.

Residue 81–83 coordinates substrate; that stretch reads VES. 83 to 84 is an NADPH binding site; sequence SK. The active-site Thioimide intermediate is the C182. D189 (proton donor) is an active-site residue. 221–222 provides a ligand contact to substrate; sequence HE. 250–251 contacts NADPH; the sequence is RG.

Belongs to the GTP cyclohydrolase I family. QueF type 2 subfamily. In terms of assembly, homodimer.

The protein localises to the cytoplasm. It catalyses the reaction 7-aminomethyl-7-carbaguanine + 2 NADP(+) = 7-cyano-7-deazaguanine + 2 NADPH + 3 H(+). It functions in the pathway tRNA modification; tRNA-queuosine biosynthesis. In terms of biological role, catalyzes the NADPH-dependent reduction of 7-cyano-7-deazaguanine (preQ0) to 7-aminomethyl-7-deazaguanine (preQ1). The polypeptide is NADPH-dependent 7-cyano-7-deazaguanine reductase (Polaromonas sp. (strain JS666 / ATCC BAA-500)).